Here is a 232-residue protein sequence, read N- to C-terminus: uncharacterized protein (232 aa).

The stretch at 89–140 forms a coiled coil; sequence EFGTWQRRKNSLEDSLREVMKRRGELQDQLTAELGAIERMQTDLVGARQTLD.

This is an uncharacterized protein from Mycobacterium leprae (strain TN).